A 246-amino-acid chain; its full sequence is MALLRGVWGVLSALGKSGADLCAVCGSRLRSPFSFAYVPRWFSSTLSGFPKKPMTSYVRFSKEQLPIFKAQNPDAKNSELIKKIAELWRELPDSEKKIYEDAYRADWQVYKEEVNRIQEQLTPSQMVSLEKEIMQKRLKKKALIKKRELTMLGKPKRPRSAYNIFIAERFQEAKDGPSQVKLKTINENWKNLSSSQKQVYIQLAEDDKVRYYNEMKSWEEQMVEVGRNDLIRRSMKHSAKKDTEEC.

The N-terminal 42 residues, 1 to 42 (MALLRGVWGVLSALGKSGADLCAVCGSRLRSPFSFAYVPRWF), are a transit peptide targeting the mitochondrion. A DNA-binding region (HMG box 1) is located at residues 50 to 118 (PKKPMTSYVR…VYKEEVNRIQ (69 aa)). S56 and S61 each carry phosphoserine; by PKA. A Phosphothreonine modification is found at T122. The segment at residues 155–219 (PKRPRSAYNI…RYYNEMKSWE (65 aa)) is a DNA-binding region (HMG box 2). S160 carries the post-translational modification Phosphoserine; by PKA. Phosphoserine occurs at positions 193 and 195.

In terms of assembly, monomer; binds DNA as a monomer. Homodimer. Component of the mitochondrial transcription initiation complex, composed at least of TFB2M, TFAM and POLRMT. In this complex TFAM recruits POLRMT to the promoter whereas TFB2M induces structural changes in POLRMT to enable promoter opening and trapping of the DNA non-template strand. Upon metabolic stress, forms a complex composed of FOXO3, SIRT3, TFAM and POLRMT. Interacts with TFB1M and TFB2M. Interacts with CLPX; this enhances DNA-binding. Post-translationally, phosphorylation by PKA within the HMG box 1 impairs DNA binding and promotes degradation by the AAA+ Lon protease.

The protein localises to the mitochondrion. It localises to the mitochondrion matrix. Its subcellular location is the mitochondrion nucleoid. Its function is as follows. Binds to the mitochondrial light strand promoter and functions in mitochondrial transcription regulation. Component of the mitochondrial transcription initiation complex, composed at least of TFB2M, TFAM and POLRMT that is required for basal transcription of mitochondrial DNA. In this complex, TFAM recruits POLRMT to a specific promoter whereas TFB2M induces structural changes in POLRMT to enable promoter opening and trapping of the DNA non-template strand. Required for accurate and efficient promoter recognition by the mitochondrial RNA polymerase. Promotes transcription initiation from the HSP1 and the light strand promoter by binding immediately upstream of transcriptional start sites. Is able to unwind DNA. Bends the mitochondrial light strand promoter DNA into a U-turn shape via its HMG boxes. Required for maintenance of normal levels of mitochondrial DNA. May play a role in organizing and compacting mitochondrial DNA. The polypeptide is Transcription factor A, mitochondrial (Sus scrofa (Pig)).